The following is a 157-amino-acid chain: 6,7-dimethyl-8-ribityllumazine synthase (157 aa).

Residues Phe-25, 59–61, and 83–85 contribute to the 5-amino-6-(D-ribitylamino)uracil site; these read AME and AII. Position 88–89 (88–89) interacts with (2S)-2-hydroxy-3-oxobutyl phosphate; that stretch reads ST. The Proton donor role is filled by His-91. Phe-116 is a binding site for 5-amino-6-(D-ribitylamino)uracil. Arg-130 is a (2S)-2-hydroxy-3-oxobutyl phosphate binding site.

The protein belongs to the DMRL synthase family.

The catalysed reaction is (2S)-2-hydroxy-3-oxobutyl phosphate + 5-amino-6-(D-ribitylamino)uracil = 6,7-dimethyl-8-(1-D-ribityl)lumazine + phosphate + 2 H2O + H(+). Its pathway is cofactor biosynthesis; riboflavin biosynthesis; riboflavin from 2-hydroxy-3-oxobutyl phosphate and 5-amino-6-(D-ribitylamino)uracil: step 1/2. Functionally, catalyzes the formation of 6,7-dimethyl-8-ribityllumazine by condensation of 5-amino-6-(D-ribitylamino)uracil with 3,4-dihydroxy-2-butanone 4-phosphate. This is the penultimate step in the biosynthesis of riboflavin. The polypeptide is 6,7-dimethyl-8-ribityllumazine synthase (Lawsonia intracellularis (strain PHE/MN1-00)).